Reading from the N-terminus, the 295-residue chain is Putative NADH-ubiquinone oxidoreductase MJ0520 (295 aa).

The next 8 membrane-spanning stretches (helical) occupy residues 8–28 (LIGA…LLGL), 69–89 (LYIF…IIAI), 129–149 (VFSA…YLTT), 163–183 (IHGS…ILLV), 199–219 (IVSG…YIAE), 220–240 (AIAY…PLVI), 243–263 (PVLT…VNGL), and 273–293 (VMLQ…RLIV).

Belongs to the complex I subunit 1 family.

The protein localises to the cell membrane. It carries out the reaction a ubiquinone + NADH + 5 H(+)(in) = a ubiquinol + NAD(+) + 4 H(+)(out). The protein is Putative NADH-ubiquinone oxidoreductase MJ0520 of Methanocaldococcus jannaschii (strain ATCC 43067 / DSM 2661 / JAL-1 / JCM 10045 / NBRC 100440) (Methanococcus jannaschii).